A 393-amino-acid chain; its full sequence is Pyridinium-3,5-bisthiocarboxylic acid mononucleotide nickel insertion protein (393 aa).

The protein belongs to the LarC family.

The catalysed reaction is Ni(II)-pyridinium-3,5-bisthiocarboxylate mononucleotide = pyridinium-3,5-bisthiocarboxylate mononucleotide + Ni(2+). In terms of biological role, involved in the biosynthesis of a nickel-pincer cofactor ((SCS)Ni(II) pincer complex). Binds Ni(2+), and functions in nickel delivery to pyridinium-3,5-bisthiocarboxylic acid mononucleotide (P2TMN), to form the mature cofactor. Is thus probably required for the activation of nickel-pincer cofactor-dependent enzymes. This Nocardioides sp. (strain ATCC BAA-499 / JS614) protein is Pyridinium-3,5-bisthiocarboxylic acid mononucleotide nickel insertion protein.